The primary structure comprises 93 residues: Late embryogenesis abundant protein B19.1A (93 aa).

The tract at residues 1-93 (MASGQQERSQ…IDESKFKTKS (93 aa)) is disordered. 2 stretches are compositionally biased toward basic and acidic residues: residues 9 to 19 (SQLDRKAREGE) and 73 to 93 (GGER…KTKS).

This sequence belongs to the small hydrophilic plant seed protein family. In terms of tissue distribution, embryos and young seedlings.

Lea proteins are late embryonic proteins abundant in higher plant seed embryos. It may have a role in desiccation tolerance by acting as an osmoprotective protein or as a desiccation-damage repair protein. The chain is Late embryogenesis abundant protein B19.1A (B19.1A) from Hordeum vulgare (Barley).